Here is a 922-residue protein sequence, read N- to C-terminus: Ubiquitin carboxyl-terminal hydrolase 29 (922 aa).

A disordered region spans residues 160–196 (GILENQGGKGQNTLSSDVQTNEDILKEDNPVPNKKYK). Positions 170–181 (QNTLSSDVQTNE) are enriched in polar residues. The region spanning 285-885 (QGFPNLGNTC…SGYIFFYMHN (601 aa)) is the USP domain. The active-site Nucleophile is Cys294. His840 functions as the Proton acceptor in the catalytic mechanism.

This sequence belongs to the peptidase C19 family.

The protein localises to the cytoplasm. It is found in the perinuclear region. The enzyme catalyses Thiol-dependent hydrolysis of ester, thioester, amide, peptide and isopeptide bonds formed by the C-terminal Gly of ubiquitin (a 76-residue protein attached to proteins as an intracellular targeting signal).. In terms of biological role, deubiquitinase involved in innate antiviral immunity by mediating 'Lys-48'-linked deubiquitination of CGAS, thereby promoting its stabilization. The chain is Ubiquitin carboxyl-terminal hydrolase 29 from Homo sapiens (Human).